A 307-amino-acid chain; its full sequence is MTKTIGLLVMAYGTPYKESDIEPYYTDIRRGKKPTEEELQDLKDRYEFIGGLSPLAGTTDRQAEALLEALNKEQDDVNFKLYLGLKHISPYIEEAVEQMHNDGIKEAVTVVLAPHYSSFSVGSYDQRAQEKADEYGIQLTHIKHYYQQPKFIKYWTEKINETLEQIPNQEHDETVLVVSAHSLPKGLIERNNDPYPHELHETAEILKQESNIIHVAEGWQSEGNTGTPWLGPDVQDLTRDLYKEHQFKHFIYTPVGFVCEHLEVLYDNDYECKVVCDDIGVNYYRPEMPNTHPLFIGAIVDEIQSHI.

Fe-coproporphyrin III is bound by residues Tyr12, Arg29, 45 to 46, Ser53, and Tyr124; that span reads RY. Fe(2+)-binding residues include His181 and Glu263.

It belongs to the ferrochelatase family.

It localises to the cytoplasm. The catalysed reaction is Fe-coproporphyrin III + 2 H(+) = coproporphyrin III + Fe(2+). Its pathway is porphyrin-containing compound metabolism; protoheme biosynthesis. Involved in coproporphyrin-dependent heme b biosynthesis. Catalyzes the insertion of ferrous iron into coproporphyrin III to form Fe-coproporphyrin III. The chain is Coproporphyrin III ferrochelatase from Staphylococcus epidermidis (strain ATCC 35984 / DSM 28319 / BCRC 17069 / CCUG 31568 / BM 3577 / RP62A).